Here is a 485-residue protein sequence, read N- to C-terminus: Glutamate--tRNA ligase (485 aa).

The 'HIGH' region signature appears at 11–21 (PSPTGLLHIGN). The 'KMSKS' region motif lies at 255–259 (KLSKR). Lys-258 lines the ATP pocket.

This sequence belongs to the class-I aminoacyl-tRNA synthetase family. Glutamate--tRNA ligase type 1 subfamily. Monomer.

It localises to the cytoplasm. It catalyses the reaction tRNA(Glu) + L-glutamate + ATP = L-glutamyl-tRNA(Glu) + AMP + diphosphate. Functionally, catalyzes the attachment of glutamate to tRNA(Glu) in a two-step reaction: glutamate is first activated by ATP to form Glu-AMP and then transferred to the acceptor end of tRNA(Glu). The chain is Glutamate--tRNA ligase from Streptococcus mutans serotype c (strain ATCC 700610 / UA159).